Consider the following 622-residue polypeptide: Palmitoyltransferase ZDHHC17 (622 aa).

Residues 1 to 294 (MADGPDEYDT…LKADKEFRQK (294 aa)) lie on the Cytoplasmic side of the membrane. The tract at residues 1 to 295 (MADGPDEYDT…KADKEFRQKV (295 aa)) is necessary and sufficient for interaction with DNAJC5 and SNAP25. 7 ANK repeats span residues 41 to 76 (THVD…VRQP), 79 to 108 (ENVT…IVDQ), 113 to 142 (LNST…DPSL), 146 to 175 (EGCS…DVDM), 179 to 209 (NGMT…SVNL), 214 to 243 (HKNT…NVDA), and 247 to 276 (KGES…AKGY). Helical transmembrane passes span 295–315 (VMLG…DLNI) and 316–336 (DSWL…QFLS). Topologically, residues 337–347 (KSFFDHSMHSA) are lumenal. The helical transmembrane segment at 348-368 (LPLGIYLATKFWMYVTWFFWF) threads the bilayer. Topologically, residues 369-371 (WND) are cytoplasmic. The chain crosses the membrane as a helical span at residues 372 to 392 (LSFLSIHLPFLANSVALFYNF). Residues 393–470 (GKSWKSDPGI…GNCVGAGNHR (78 aa)) are Lumenal-facing. One can recognise a DHHC domain in the interval 427–477 (IFCSTCLIRKPVRSKHCGVCNRCIAKFDHHCPWVGNCVGAGNHRYFMGYLF). Cys457 acts as the S-palmitoyl cysteine intermediate in catalysis. Residues 471-491 (YFMGYLFFLLFMICWMIYGCV) traverse the membrane as a helical segment. The Cytoplasmic portion of the chain corresponds to 492-506 (SYWGLHCETTYTKDG). A helical transmembrane segment spans residues 507–526 (FWTYITQIATCSPWMFWMFL). Residues 527-529 (NSV) are Lumenal-facing. A helical membrane pass occupies residues 530–552 (FHFMWVAVLLMCQMYQITCLGIT). The Cytoplasmic segment spans residues 553–622 (TNERMNARRY…QISGSGYQLV (70 aa)).

Belongs to the DHHC palmitoyltransferase family. AKR/ZDHHC17 subfamily. Interacts (via ANK repeats) with numerous proteins (via the consensus sequence motif [VIAP]-[VIT]-x-x-Q-P). Interacts (via ANK repeats) with CLIP3. Interacts (via ANK repeats) with HTT. Interacts (via ANK repeats) with DNAJC5 (via C-terminus). Interacts (via ANK repeats) with MAP6. Interacts (via ANK repeats) with SNAP23. Interacts (via ANK repeats) with SNAP25. Interacts (via ANK repeats) with EVL. Interacts with SPRED1 and SPRED3. Interacts with GPM6A and OPTN. May interact (via ANK repeats) with SPRED2. May interact with NTRK1; may regulate its localization and function. Post-translationally, autopalmitoylated. Autopalmitoylation has a regulatory role in ZDHHC17-mediated Mg(2+) transport.

Its subcellular location is the golgi apparatus membrane. It is found in the cytoplasmic vesicle membrane. The protein resides in the presynaptic cell membrane. The catalysed reaction is L-cysteinyl-[protein] + hexadecanoyl-CoA = S-hexadecanoyl-L-cysteinyl-[protein] + CoA. It catalyses the reaction L-cysteinyl-[protein] + tetradecanoyl-CoA = S-tetradecanoyl-L-cysteinyl-[protein] + CoA. It carries out the reaction L-cysteinyl-[protein] + octadecanoyl-CoA = S-octadecanoyl-L-cysteinyl-[protein] + CoA. Functionally, palmitoyltransferase that catalyzes the addition of palmitate onto various protein substrates and is involved in a variety of cellular processes. Has no stringent fatty acid selectivity and in addition to palmitate can also transfer onto target proteins myristate from tetradecanoyl-CoA and stearate from octadecanoyl-CoA. Palmitoyltransferase specific for a subset of neuronal proteins, including SNAP25, DLG4/PSD95, GAD2, SYT1 and HTT. Also palmitoylates neuronal protein GPM6A as well as SPRED1 and SPRED3. Could also play a role in axonogenesis through the regulation of NTRK1 and the downstream ERK1/ERK2 signaling cascade. May be involved in the sorting or targeting of critical proteins involved in the initiating events of endocytosis at the plasma membrane. May play a role in Mg(2+) transport. Could also palmitoylate DNAJC5 and regulate its localization to the Golgi membrane. Palmitoylates CASP6, thereby preventing its dimerization and subsequent activation. The polypeptide is Palmitoyltransferase ZDHHC17 (Rattus norvegicus (Rat)).